The chain runs to 277 residues: uncharacterized protein (277 aa).

Solcar repeat units follow at residues 1–84 (MDQA…SKRV), 96–179 (ISVL…LKLW), and 184–268 (PTSL…VGMH). The next 6 helical transmembrane spans lie at 3-24 (QAIAGLAAGTASTLIMHPLDLA), 60-80 (LSINVLGSAASWGAYFCIYDF), 102-122 (LCSSGFAGCIVAALTNPIWVV), 152-172 (CYAGFAPSLLGVSQGALQFMA), 190-210 (IFMSAASKVFAAVNMYPLLVI), and 240-261 (FYKGFLPHLLRVVPQTCITFLV).

It belongs to the mitochondrial carrier (TC 2.A.29) family.

Its subcellular location is the mitochondrion inner membrane. This is an uncharacterized protein from Schizosaccharomyces pombe (strain 972 / ATCC 24843) (Fission yeast).